We begin with the raw amino-acid sequence, 1324 residues long: Myotubularin-related protein DDB_G0290005 (1324 aa).

The disordered stretch occupies residues 140–276 (KYHDNTTPNN…TSSTNGNCST (137 aa)). Over residues 144 to 180 (NTTPNNNNNNNNNNNNNNNNTNNNNNNNINKSNNSST) the composition is skewed to low complexity. Positions 181-194 (DQLNSFSLEKQPSQ) are enriched in polar residues. A compositionally biased stretch (low complexity) spans 195 to 222 (NENLNNNNNNNNNNNNGNNNINNNNLMN). Residues 223-247 (SLTQPSTSSRSRLLKSNSTPINLNE) show a composition bias toward polar residues. Low complexity predominate over residues 248-276 (SSTSTNSPTLSSTTTTTTTTSSTNGNCST). Residues 349–807 (GWLFYDPIEE…KGVQLWSDYF (459 aa)) enclose the Myotubularin phosphatase domain. Substrate-binding positions include 514-515 (NI), 575-581 (CIDGWDR), and R621. C575 acts as the Phosphocysteine intermediate in catalysis. Disordered stretches follow at residues 624–664 (QSIS…TTTS), 841–1043 (QKKK…QQQE), 1066–1110 (EQQE…QQQT), 1144–1213 (RKQE…LTMP), and 1232–1296 (LHPN…DNTS). Low complexity-rich tracts occupy residues 625–664 (SISS…TTTS) and 852–864 (GASG…SGSS). The span at 865–882 (SKHHHHHHHHHHHHHHRK) shows a compositional bias: basic residues. Positions 883–894 (STDEKDSKEKSS) are enriched in basic and acidic residues. Composition is skewed to low complexity over residues 899 to 914 (SRTS…STSS) and 927 to 973 (TITT…TTTP). Positions 988 to 1002 (DKLKSPSGDDIKQEQ) are enriched in basic and acidic residues. The span at 1005 to 1024 (MNQFTSQHPNNQMESSSEIN) shows a compositional bias: polar residues. Residues 1020-1195 (SSEINQQNEQ…LEQQKPKADI (176 aa)) adopt a coiled-coil conformation. Residues 1025-1043 (QQNEQSQLEQQQEQQQQQE) are compositionally biased toward low complexity. The span at 1079–1090 (PNETITYSMESD) shows a compositional bias: polar residues. Residues 1091-1109 (SQSSISQNQNQLQQQQQQQ) show a composition bias toward low complexity. The span at 1144-1193 (RKQEKEKRKLEKEKKQKERAERKLEKEKKRDQKEREQKEKELLEQQKPKA) shows a compositional bias: basic and acidic residues. A compositionally biased stretch (polar residues) spans 1234-1243 (PNLSDQNSQT). 2 stretches are compositionally biased toward low complexity: residues 1244-1258 (NSSG…NSPN) and 1265-1294 (SNLS…NNDN).

It belongs to the protein-tyrosine phosphatase family. Non-receptor class myotubularin subfamily.

It localises to the cytoplasm. Phosphatase that acts on lipids with a phosphoinositol headgroup. This chain is Myotubularin-related protein DDB_G0290005, found in Dictyostelium discoideum (Social amoeba).